The primary structure comprises 144 residues: Large ribosomal subunit protein uL13 (144 aa).

It belongs to the universal ribosomal protein uL13 family. In terms of assembly, part of the 50S ribosomal subunit.

In terms of biological role, this protein is one of the early assembly proteins of the 50S ribosomal subunit, although it is not seen to bind rRNA by itself. It is important during the early stages of 50S assembly. This Herpetosiphon aurantiacus (strain ATCC 23779 / DSM 785 / 114-95) protein is Large ribosomal subunit protein uL13.